We begin with the raw amino-acid sequence, 429 residues long: Gamma-glutamyl phosphate reductase (429 aa).

This sequence belongs to the gamma-glutamyl phosphate reductase family.

Its subcellular location is the cytoplasm. It catalyses the reaction L-glutamate 5-semialdehyde + phosphate + NADP(+) = L-glutamyl 5-phosphate + NADPH + H(+). The protein operates within amino-acid biosynthesis; L-proline biosynthesis; L-glutamate 5-semialdehyde from L-glutamate: step 2/2. In terms of biological role, catalyzes the NADPH-dependent reduction of L-glutamate 5-phosphate into L-glutamate 5-semialdehyde and phosphate. The product spontaneously undergoes cyclization to form 1-pyrroline-5-carboxylate. The polypeptide is Gamma-glutamyl phosphate reductase (Nocardioides sp. (strain ATCC BAA-499 / JS614)).